A 165-amino-acid polypeptide reads, in one-letter code: Protein SprT (165 aa).

Positions 20–163 constitute a SprT-like domain; the sequence is ENLAQANLKL…RCVHCGEPLV (144 aa). Histidine 78 contacts Zn(2+). Residue glutamate 79 is part of the active site. Histidine 82 contributes to the Zn(2+) binding site.

The protein belongs to the SprT family. Zn(2+) is required as a cofactor.

It is found in the cytoplasm. In Salmonella arizonae (strain ATCC BAA-731 / CDC346-86 / RSK2980), this protein is Protein SprT.